The primary structure comprises 64 residues: Ferredoxin-2 (64 aa).

Positions 2-29 (RIHVDQDKCCGAGSCVLAAPDVFDQREE) constitute a 4Fe-4S ferredoxin-type domain. [3Fe-4S] cluster-binding residues include Cys-10, Cys-16, and Cys-55.

Requires [3Fe-4S] cluster as cofactor.

Functionally, electron transport protein for the cytochrome P-450-SU2 system. This chain is Ferredoxin-2 (subB), found in Streptomyces griseolus.